Consider the following 510-residue polypeptide: NADP-dependent fatty aldehyde dehydrogenase (510 aa).

Residue 229–234 coordinates NADP(+); that stretch reads GSVGGG. Residues Glu253 and Cys289 contribute to the active site.

The protein belongs to the aldehyde dehydrogenase family. As to quaternary structure, homodimer.

It carries out the reaction an aldehyde + NADP(+) + H2O = a carboxylate + NADPH + 2 H(+). Catalyzes the oxidation of long-chain aliphatic aldehydes to acids. May be implicated in controlling luminescence as it catalyzes the oxidation of the fatty aldehyde substrate for the light-emitting reaction. This is NADP-dependent fatty aldehyde dehydrogenase (aldH) from Vibrio harveyi (Beneckea harveyi).